The chain runs to 340 residues: L-threonine 3-dehydrogenase (340 aa).

Cys-38 is a Zn(2+) binding site. Residues Thr-40 and His-43 each act as charge relay system in the active site. Residues His-63, Glu-64, Cys-93, Cys-96, Cys-99, and Cys-107 each contribute to the Zn(2+) site. NAD(+) contacts are provided by residues Ile-175, Asp-195, Arg-200, 261–263 (LGI), and 285–286 (IY).

It belongs to the zinc-containing alcohol dehydrogenase family. Homotetramer. Requires Zn(2+) as cofactor.

It localises to the cytoplasm. The enzyme catalyses L-threonine + NAD(+) = (2S)-2-amino-3-oxobutanoate + NADH + H(+). Its pathway is amino-acid degradation; L-threonine degradation via oxydo-reductase pathway; glycine from L-threonine: step 1/2. Catalyzes the NAD(+)-dependent oxidation of L-threonine to 2-amino-3-ketobutyrate. This is L-threonine 3-dehydrogenase from Xanthomonas axonopodis pv. citri (strain 306).